The following is a 488-amino-acid chain: uncharacterized protein (488 aa).

Residue 27–38 (IVHFGFGAFHRA) coordinates NAD(+).

It belongs to the mannitol dehydrogenase family. UxuB subfamily.

This is an uncharacterized protein from Escherichia coli (strain K12).